Here is a 389-residue protein sequence, read N- to C-terminus: Large envelope protein (389 aa).

An N-acetylmethionine modification is found at methionine 1. Glycine 2 carries N-myristoyl glycine; by host lipidation. The tract at residues 2–108 (GQNLSVTNPL…PPLRDTHPQA (107 aa)) is pre-S1. A pre-S region spans residues 2–163 (GQNLSVTNPL…FLKTGDPALN (162 aa)). At 2-170 (GQNLSVTNPL…ALNMESISSG (169 aa)) the chain is on the virion surface; in external conformation side. The Intravirion; in internal conformation portion of the chain corresponds to 2-242 (GQNLSVTNPL…PGYRWMCLRR (241 aa)). The tract at residues 78–105 (PAVPPPASTNRQSGRRPTPISPPLRDTH) is disordered. The tract at residues 109 to 163 (MQWNSTVFHQALQDPRVRGLYFPAGGSSSGTVSPVPTTASPISSTFLKTGDPALN) is pre-S2. Residues 171-191 (FLGPLLVLQAGFFLLTKILTI) form a helical membrane-spanning segment. Over 192-242 (PQSLDSWWTSLNFLGGAPVCPGQNSQSLTSNHSPTSCPPICPGYRWMCLRR) the chain is Intravirion; in external conformation. Residues 243–263 (FIIFLFILLLCLIFLLVLLDY) form a helical membrane-spanning segment. Over 264-337 (RGMLPVCPLL…WASVRFSWLN (74 aa)) the chain is Virion surface. N-linked (GlcNAc...) asparagine; by host glycosylation is present at asparagine 309. The helical transmembrane segment at 338 to 358 (LLVPFVQWFAGLSPTVWLSVI) threads the bilayer. Residues 359–364 (WMIWYW) lie on the Intravirion side of the membrane. The chain crosses the membrane as a helical span at residues 365-387 (GPSLYNILSPFIPLLPIFFCLWA). Over 388-389 (YI) the chain is Virion surface.

The protein belongs to the orthohepadnavirus major surface antigen family. As to quaternary structure, in its internal form (Li-HBsAg), interacts with the capsid protein and with the isoform S. Interacts with host chaperone CANX. Associates with host chaperone CANX through its pre-S2 N glycan; this association may be essential for isoform M proper secretion. In terms of assembly, interacts with isoform L. Interacts with the antigens of satellite virus HDV (HDVAgs); this interaction is required for encapsidation of HDV genomic RNA. Post-translationally, isoform M is N-terminally acetylated by host at a ratio of 90%, and N-glycosylated by host at the pre-S2 region. In terms of processing, myristoylated.

The protein localises to the virion membrane. Functionally, the large envelope protein exists in two topological conformations, one which is termed 'external' or Le-HBsAg and the other 'internal' or Li-HBsAg. In its external conformation the protein attaches the virus to cell receptors and thereby initiating infection. This interaction determines the species specificity and liver tropism. This attachment induces virion internalization predominantly through caveolin-mediated endocytosis. The large envelope protein also assures fusion between virion membrane and endosomal membrane. In its internal conformation the protein plays a role in virion morphogenesis and mediates the contact with the nucleocapsid like a matrix protein. In terms of biological role, the middle envelope protein plays an important role in the budding of the virion. It is involved in the induction of budding in a nucleocapsid independent way. In this process the majority of envelope proteins bud to form subviral lipoprotein particles of 22 nm of diameter that do not contain a nucleocapsid. The sequence is that of Large envelope protein from Pongo pygmaeus (Bornean orangutan).